We begin with the raw amino-acid sequence, 283 residues long: Pantothenate synthetase (283 aa).

30–37 (MGNLHAGH) lines the ATP pocket. His-37 acts as the Proton donor in catalysis. Gln-61 is a (R)-pantoate binding site. Residue Gln-61 coordinates beta-alanine. ATP is bound at residue 149-152 (GQKD). Gln-155 is a binding site for (R)-pantoate. ATP-binding positions include Val-178 and 186–189 (LSSR).

It belongs to the pantothenate synthetase family. In terms of assembly, homodimer.

The protein localises to the cytoplasm. It catalyses the reaction (R)-pantoate + beta-alanine + ATP = (R)-pantothenate + AMP + diphosphate + H(+). The protein operates within cofactor biosynthesis; (R)-pantothenate biosynthesis; (R)-pantothenate from (R)-pantoate and beta-alanine: step 1/1. Catalyzes the condensation of pantoate with beta-alanine in an ATP-dependent reaction via a pantoyl-adenylate intermediate. The protein is Pantothenate synthetase of Hydrogenovibrio crunogenus (strain DSM 25203 / XCL-2) (Thiomicrospira crunogena).